Consider the following 726-residue polypeptide: Catalase-peroxidase (726 aa).

The interval 1–33 is disordered; it reads MSTSDDIHNTTATGKCPFHQGGHDQSAGAGTTT. The segment at residues 105 to 226 is a cross-link (tryptophyl-tyrosyl-methioninium (Trp-Tyr) (with M-252)); it reads WHGAGTYRSI…LGATEMGLIY (122 aa). The active-site Proton acceptor is the histidine 106. A cross-link (tryptophyl-tyrosyl-methioninium (Tyr-Met) (with W-105)) is located at residues 226–252; sequence YVNPEGPDHSGEPLSAAAAIRATFGNM. Histidine 267 is a heme b binding site.

It belongs to the peroxidase family. Peroxidase/catalase subfamily. Homodimer or homotetramer. Heme b serves as cofactor. In terms of processing, formation of the three residue Trp-Tyr-Met cross-link is important for the catalase, but not the peroxidase activity of the enzyme.

It catalyses the reaction H2O2 + AH2 = A + 2 H2O. It carries out the reaction 2 H2O2 = O2 + 2 H2O. Bifunctional enzyme with both catalase and broad-spectrum peroxidase activity. This Shigella flexneri protein is Catalase-peroxidase.